The following is a 324-amino-acid chain: CIMIP2 protein GA14893 (324 aa).

This sequence belongs to the CIMIP2 family.

The protein resides in the cytoplasm. The protein localises to the cytoskeleton. It is found in the cilium axoneme. Functionally, probable microtubule inner protein (MIP) part of the dynein-decorated doublet microtubules (DMTs) in cilium axoneme. The protein is CIMIP2 protein GA14893 of Drosophila pseudoobscura pseudoobscura (Fruit fly).